The primary structure comprises 361 residues: Phenylalanine 4-monooxygenase, chloroplastic (361 aa).

The transit peptide at 1–55 directs the protein to the chloroplast; it reads MLALRQGALLLSARGGQTTHDNLQLCAGPSRRPRARWISSAPRPSTLVERHIRPQ. The tract at residues 47-67 is disordered; the sequence is LVERHIRPQASTASDATTSTS. The segment covering 56–67 has biased composition (low complexity); sequence ASTASDATTSTS. 3 residues coordinate Fe cation: His-227, His-232, and Glu-272.

Belongs to the biopterin-dependent aromatic amino acid hydroxylase family. Fe(2+) serves as cofactor.

It localises to the plastid. It is found in the chloroplast. The catalysed reaction is (6R)-L-erythro-5,6,7,8-tetrahydrobiopterin + L-phenylalanine + O2 = (4aS,6R)-4a-hydroxy-L-erythro-5,6,7,8-tetrahydrobiopterin + L-tyrosine. In terms of biological role, catalyzes the hydroxylation of L-phenylalanine to L-tyrosine. Can functionally complement an Escherichia coli tyrosine auxotroph. This Chlamydomonas reinhardtii (Chlamydomonas smithii) protein is Phenylalanine 4-monooxygenase, chloroplastic.